Reading from the N-terminus, the 98-residue chain is NADH-ubiquinone oxidoreductase chain 4L (98 aa).

A run of 3 helical transmembrane segments spans residues 1–21 (MTMV…GLLM), 29–49 (SLLC…VTIL), and 61–81 (IVLL…LVMV).

Belongs to the complex I subunit 4L family. In terms of assembly, core subunit of respiratory chain NADH dehydrogenase (Complex I) which is composed of 45 different subunits.

Its subcellular location is the mitochondrion inner membrane. It catalyses the reaction a ubiquinone + NADH + 5 H(+)(in) = a ubiquinol + NAD(+) + 4 H(+)(out). Core subunit of the mitochondrial membrane respiratory chain NADH dehydrogenase (Complex I) which catalyzes electron transfer from NADH through the respiratory chain, using ubiquinone as an electron acceptor. Part of the enzyme membrane arm which is embedded in the lipid bilayer and involved in proton translocation. The protein is NADH-ubiquinone oxidoreductase chain 4L (MT-ND4L) of Monachus monachus (Mediterranean monk seal).